The sequence spans 238 residues: MEKGQMLYEGKAKKVYTTDQEGIYWVEYKDDATAFNGEKKGTIGDKGIVNNRLSALLFEVLEKTGIPTHFIELLNDREMLVRKLEMIPLEVVVRNIAAGSLAKRLGVAEGLNLSRPVVELYYKDDALGDPFVNESHSLAMGWAEQSDLKEIQELGLKINGELQKILDQAGIILVDFKLEFGKAEGKVYLGDEISPDTCRFWDKETQEKLDKDRFRRDLGKVEEAYAEVYRRVKEVLKD.

The protein belongs to the SAICAR synthetase family.

The enzyme catalyses 5-amino-1-(5-phospho-D-ribosyl)imidazole-4-carboxylate + L-aspartate + ATP = (2S)-2-[5-amino-1-(5-phospho-beta-D-ribosyl)imidazole-4-carboxamido]succinate + ADP + phosphate + 2 H(+). It functions in the pathway purine metabolism; IMP biosynthesis via de novo pathway; 5-amino-1-(5-phospho-D-ribosyl)imidazole-4-carboxamide from 5-amino-1-(5-phospho-D-ribosyl)imidazole-4-carboxylate: step 1/2. This Desulfitobacterium hafniense (strain DSM 10664 / DCB-2) protein is Phosphoribosylaminoimidazole-succinocarboxamide synthase.